Consider the following 1135-residue polypeptide: WASH complex subunit 4 (1135 aa).

N-acetylalanine is present on Ala-2.

It belongs to the SWIP family. As to quaternary structure, probable component of the WASH complex.

The sequence is that of WASH complex subunit 4 from Dictyostelium discoideum (Social amoeba).